The sequence spans 282 residues: Bicarbonate transport ATP-binding protein CmpD (282 aa).

An ABC transporter domain is found at leucine 24–glutamate 257. Glycine 60–serine 67 lines the ATP pocket.

This sequence belongs to the ABC transporter superfamily. Nitrate/nitrite/cyanate uptake transporter (NitT) (TC 3.A.1.16) family. As to quaternary structure, the complex is composed of two ATP-binding proteins (CmpC and CmpD), a transmembrane protein (CmpB) and a solute-binding protein (CmpA).

The protein resides in the cell inner membrane. Its function is as follows. Part of the ABC transporter complex CmpABCD involved in bicarbonate transport. Responsible for energy coupling to the transport system. The chain is Bicarbonate transport ATP-binding protein CmpD (cmpD) from Synechocystis sp. (strain ATCC 27184 / PCC 6803 / Kazusa).